A 101-amino-acid chain; its full sequence is Protein translation factor SUI1 homolog (101 aa).

This sequence belongs to the SUI1 family.

This chain is Protein translation factor SUI1 homolog, found in Methanothermobacter thermautotrophicus (strain ATCC 29096 / DSM 1053 / JCM 10044 / NBRC 100330 / Delta H) (Methanobacterium thermoautotrophicum).